The chain runs to 545 residues: Methionine--tRNA ligase (545 aa).

The 'HIGH' region signature appears at 10–20 (PYANGSLHIGH). Zn(2+) is bound by residues Cys-141, Cys-144, Cys-153, and Cys-156. A 'KMSKS' region motif is present at residues 329 to 333 (KISTS). Thr-332 provides a ligand contact to ATP.

It belongs to the class-I aminoacyl-tRNA synthetase family. MetG type 1 subfamily. Monomer. Zn(2+) is required as a cofactor.

It is found in the cytoplasm. It catalyses the reaction tRNA(Met) + L-methionine + ATP = L-methionyl-tRNA(Met) + AMP + diphosphate. Its function is as follows. Is required not only for elongation of protein synthesis but also for the initiation of all mRNA translation through initiator tRNA(fMet) aminoacylation. The chain is Methionine--tRNA ligase from Streptococcus pneumoniae (strain 70585).